We begin with the raw amino-acid sequence, 255 residues long: Large ribosomal subunit protein uL2 (255 aa).

Positions 211 to 235 (PHGGGNHQHVGHATTTKRDDPAGKK) are disordered.

Belongs to the universal ribosomal protein uL2 family.

In Dictyostelium discoideum (Social amoeba), this protein is Large ribosomal subunit protein uL2 (rpl8).